The sequence spans 318 residues: Protease HtpX homolog (318 aa).

2 consecutive transmembrane segments (helical) span residues 6–26 and 28–48; these read TAML…LIGG and AGMM…YWNS. Histidine 130 lines the Zn(2+) pocket. Residue glutamate 131 is part of the active site. Residue histidine 134 participates in Zn(2+) binding. The next 2 membrane-spanning stretches (helical) occupy residues 145-165 and 173-193; these read ITAT…FFGG and PLGF…AMLV. Residue glutamate 202 coordinates Zn(2+). Residues 284–318 form a disordered region; the sequence is NVSTGPVRAVNPTRKSRSVPNTGRGGSQPPRGPWS.

The protein belongs to the peptidase M48B family. The cofactor is Zn(2+).

Its subcellular location is the cell inner membrane. This chain is Protease HtpX homolog, found in Rhizobium etli (strain CIAT 652).